The primary structure comprises 233 residues: Pyridoxine 5'-phosphate synthase (233 aa).

Asn6 provides a ligand contact to 3-amino-2-oxopropyl phosphate. Residue 8–9 participates in 1-deoxy-D-xylulose 5-phosphate binding; sequence DH. Position 17 (Arg17) interacts with 3-amino-2-oxopropyl phosphate. The active-site Proton acceptor is His42. Residues Arg44 and His49 each coordinate 1-deoxy-D-xylulose 5-phosphate. Residue Glu69 is the Proton acceptor of the active site. Residue Thr99 coordinates 1-deoxy-D-xylulose 5-phosphate. The Proton donor role is filled by His186. Residues Gly187 and 208–209 contribute to the 3-amino-2-oxopropyl phosphate site; that span reads GH.

This sequence belongs to the PNP synthase family. As to quaternary structure, homooctamer; tetramer of dimers.

It localises to the cytoplasm. It catalyses the reaction 3-amino-2-oxopropyl phosphate + 1-deoxy-D-xylulose 5-phosphate = pyridoxine 5'-phosphate + phosphate + 2 H2O + H(+). It participates in cofactor biosynthesis; pyridoxine 5'-phosphate biosynthesis; pyridoxine 5'-phosphate from D-erythrose 4-phosphate: step 5/5. Catalyzes the complicated ring closure reaction between the two acyclic compounds 1-deoxy-D-xylulose-5-phosphate (DXP) and 3-amino-2-oxopropyl phosphate (1-amino-acetone-3-phosphate or AAP) to form pyridoxine 5'-phosphate (PNP) and inorganic phosphate. The sequence is that of Pyridoxine 5'-phosphate synthase from Anaplasma phagocytophilum (strain HZ).